We begin with the raw amino-acid sequence, 250 residues long: HTH-type transcriptional regulator KipR (250 aa).

One can recognise an HTH iclR-type domain in the interval asparagine 5–leucine 65. The H-T-H motif DNA-binding region spans leucine 26–serine 45. The region spanning isoleucine 80–tyrosine 249 is the IclR-ED domain.

Transcriptional repressor of the kip gene-containing operon. This Bacillus subtilis (strain 168) protein is HTH-type transcriptional regulator KipR (kipR).